The following is a 524-amino-acid chain: Cytochrome P450 1A1 (524 aa).

A mitochondrial targeting signal region spans residues 33–44 (WQPRLPKGLKSP). An O-linked (GlcNAc) serine glycan is attached at serine 71. Phenylalanine 228 lines the substrate pocket. Residue cysteine 461 participates in heme binding.

Belongs to the cytochrome P450 family. In terms of assembly, interacts with cytosolic chaperones HSP70 and HSP90; this interaction is required for initial targeting to mitochondria. Interacts (via mitochondrial targeting signal) with TOMM40 (via N-terminus); this interaction is required for translocation across the mitochondrial outer membrane. It depends on heme as a cofactor.

The protein resides in the endoplasmic reticulum membrane. Its subcellular location is the mitochondrion inner membrane. It is found in the microsome membrane. The protein localises to the cytoplasm. The enzyme catalyses an organic molecule + reduced [NADPH--hemoprotein reductase] + O2 = an alcohol + oxidized [NADPH--hemoprotein reductase] + H2O + H(+). The catalysed reaction is estrone + reduced [NADPH--hemoprotein reductase] + O2 = 2-hydroxyestrone + oxidized [NADPH--hemoprotein reductase] + H2O + H(+). It catalyses the reaction estrone + reduced [NADPH--hemoprotein reductase] + O2 = 4-hydroxyestrone + oxidized [NADPH--hemoprotein reductase] + H2O + H(+). It carries out the reaction estrone + reduced [NADPH--hemoprotein reductase] + O2 = 6alpha-hydroxyestrone + oxidized [NADPH--hemoprotein reductase] + H2O + H(+). The enzyme catalyses estrone + reduced [NADPH--hemoprotein reductase] + O2 = 15alpha-hydroxyestrone + oxidized [NADPH--hemoprotein reductase] + H2O + H(+). The catalysed reaction is estrone + reduced [NADPH--hemoprotein reductase] + O2 = 16alpha-hydroxyestrone + oxidized [NADPH--hemoprotein reductase] + H2O + H(+). It catalyses the reaction 17beta-estradiol + reduced [NADPH--hemoprotein reductase] + O2 = 2-hydroxy-17beta-estradiol + oxidized [NADPH--hemoprotein reductase] + H2O + H(+). It carries out the reaction 17beta-estradiol + reduced [NADPH--hemoprotein reductase] + O2 = 4-hydroxy-17beta-estradiol + oxidized [NADPH--hemoprotein reductase] + H2O + H(+). The enzyme catalyses 17beta-estradiol + reduced [NADPH--hemoprotein reductase] + O2 = 6alpha-hydroxy-17beta-estradiol + oxidized [NADPH--hemoprotein reductase] + H2O + H(+). The catalysed reaction is 17beta-estradiol + reduced [NADPH--hemoprotein reductase] + O2 = 7alpha-hydroxy-17beta-estradiol + oxidized [NADPH--hemoprotein reductase] + H2O + H(+). It catalyses the reaction 17beta-estradiol + reduced [NADPH--hemoprotein reductase] + O2 = 15alpha-hydroxy-17beta-estradiol + oxidized [NADPH--hemoprotein reductase] + H2O + H(+). It carries out the reaction (5Z,8Z,11Z)-eicosatrienoate + reduced [NADPH--hemoprotein reductase] + O2 = 19-hydroxy-(5Z,8Z,11Z)-eicosatrienoate + oxidized [NADPH--hemoprotein reductase] + H2O + H(+). The enzyme catalyses (5Z,8Z,11Z,14Z)-eicosatetraenoate + reduced [NADPH--hemoprotein reductase] + O2 = 16-hydroxy-(5Z,8Z,11Z,14Z)-eicosatetraenoate + oxidized [NADPH--hemoprotein reductase] + H2O + H(+). The catalysed reaction is (5Z,8Z,11Z,14Z)-eicosatetraenoate + reduced [NADPH--hemoprotein reductase] + O2 = 17-hydroxy-(5Z,8Z,11Z,14Z)-eicosatetraenoate + oxidized [NADPH--hemoprotein reductase] + H2O + H(+). It catalyses the reaction (5Z,8Z,11Z,14Z)-eicosatetraenoate + reduced [NADPH--hemoprotein reductase] + O2 = 18-hydroxy-(5Z,8Z,11Z,14Z)-eicosatetraenoate + oxidized [NADPH--hemoprotein reductase] + H2O + H(+). It carries out the reaction (5Z,8Z,11Z,14Z)-eicosatetraenoate + reduced [NADPH--hemoprotein reductase] + O2 = 19-hydroxy-(5Z,8Z,11Z,14Z)-eicosatetraenoate + oxidized [NADPH--hemoprotein reductase] + H2O + H(+). The enzyme catalyses (5Z,8Z,11Z,14Z,17Z)-eicosapentaenoate + reduced [NADPH--hemoprotein reductase] + O2 = 19-hydroxy-(5Z,8Z,11Z,14Z,17Z)-eicosapentaenoate + oxidized [NADPH--hemoprotein reductase] + H2O + H(+). The catalysed reaction is (5Z,8Z,11Z,14Z)-eicosatetraenoate + reduced [NADPH--hemoprotein reductase] + O2 = (8R,9S)-epoxy-(5Z,11Z,14Z)-eicosatrienoate + oxidized [NADPH--hemoprotein reductase] + H2O + H(+). It catalyses the reaction (5Z,8Z,11Z,14Z)-eicosatetraenoate + reduced [NADPH--hemoprotein reductase] + O2 = (11R,12S)-epoxy-(5Z,8Z,14Z)-eicosatrienoate + oxidized [NADPH--hemoprotein reductase] + H2O + H(+). It carries out the reaction (5Z,8Z,11Z,14Z)-eicosatetraenoate + reduced [NADPH--hemoprotein reductase] + O2 = (14S,15R)-epoxy-(5Z,8Z,11Z)-eicosatrienoate + oxidized [NADPH--hemoprotein reductase] + H2O + H(+). The enzyme catalyses (5Z,8Z,11Z,14Z)-eicosatetraenoate + reduced [NADPH--hemoprotein reductase] + O2 = (14R,15S)-epoxy-(5Z,8Z,11Z)-eicosatrienoate + oxidized [NADPH--hemoprotein reductase] + H2O + H(+). The catalysed reaction is (5Z,8Z,11Z,14Z,17Z)-eicosapentaenoate + reduced [NADPH--hemoprotein reductase] + O2 = (17R,18S)-epoxy-(5Z,8Z,11Z,14Z)-eicosatetraenoate + oxidized [NADPH--hemoprotein reductase] + H2O + H(+). It catalyses the reaction (4Z,7Z,10Z,13Z,16Z,19Z)-docosahexaenoate + reduced [NADPH--hemoprotein reductase] + O2 = (19S,20R)-epoxy-(4Z,7Z,10Z,13Z,16Z)-docosapentaenoate + oxidized [NADPH--hemoprotein reductase] + H2O + H(+). It carries out the reaction (4Z,7Z,10Z,13Z,16Z,19Z)-docosahexaenoate + reduced [NADPH--hemoprotein reductase] + O2 = (19R,20S)-epoxy-(4Z,7Z,10Z,13Z,16Z)-docosapentaenoate + oxidized [NADPH--hemoprotein reductase] + H2O + H(+). The enzyme catalyses all-trans-retinol + reduced [NADPH--hemoprotein reductase] + O2 = all-trans-retinal + oxidized [NADPH--hemoprotein reductase] + 2 H2O + H(+). The catalysed reaction is all-trans-retinal + reduced [NADPH--hemoprotein reductase] + O2 = all-trans-retinoate + oxidized [NADPH--hemoprotein reductase] + H2O + 2 H(+). It catalyses the reaction (13S)-hydroperoxy-(9Z,11E)-octadecadienoate = 13-oxo-(9Z,11E)-octadecadienoate + H2O. It carries out the reaction (12S)-hydroperoxy-(5Z,8Z,10E,14Z)-eicosatetraenoate = 12-oxo-(5Z,8Z,10E,14Z)-eicosatetraenoate + H2O. The enzyme catalyses (15S)-hydroperoxy-(5Z,8Z,11Z,13E)-eicosatetraenoate = 15-oxo-(5Z,8Z,11Z,13E)-eicosatetraenoate + H2O. The catalysed reaction is (5S)-hydroperoxy-(6E,8Z,11Z,14Z)-eicosatetraenoate = 5-oxo-(6E,8Z,11Z,14Z)-eicosatetraenoate + H2O. It functions in the pathway steroid hormone biosynthesis. It participates in lipid metabolism; fatty acid metabolism. Its pathway is cofactor metabolism; retinol metabolism. In terms of biological role, a cytochrome P450 monooxygenase involved in the metabolism of various endogenous substrates, including fatty acids, steroid hormones and vitamins. Mechanistically, uses molecular oxygen inserting one oxygen atom into a substrate, and reducing the second into a water molecule, with two electrons provided by NADPH via cytochrome P450 reductase (CPR; NADPH-ferrihemoprotein reductase). Catalyzes the hydroxylation of carbon-hydrogen bonds. Exhibits high catalytic activity for the formation of hydroxyestrogens from estrone (E1) and 17beta-estradiol (E2), namely 2-hydroxy E1 and E2, as well as D-ring hydroxylated E1 and E2 at the C15alpha and C16alpha positions. Displays different regioselectivities for polyunsaturated fatty acids (PUFA) hydroxylation. Catalyzes the epoxidation of double bonds of certain PUFA. Converts arachidonic acid toward epoxyeicosatrienoic acid (EET) regioisomers, 8,9-, 11,12-, and 14,15-EET, that function as lipid mediators in the vascular system. Displays an absolute stereoselectivity in the epoxidation of eicosapentaenoic acid (EPA) producing the 17(R),18(S) enantiomer. May play an important role in all-trans retinoic acid biosynthesis in extrahepatic tissues. Catalyzes two successive oxidative transformation of all-trans retinol to all-trans retinal and then to the active form all-trans retinoic acid. May also participate in eicosanoids metabolism by converting hydroperoxide species into oxo metabolites (lipoxygenase-like reaction, NADPH-independent). The chain is Cytochrome P450 1A1 (CYP1A1) from Canis lupus familiaris (Dog).